A 57-amino-acid chain; its full sequence is DNA-directed RNA polymerase subunit Rpo6 (57 aa).

It belongs to the archaeal Rpo6/eukaryotic RPB6 RNA polymerase subunit family. In terms of assembly, part of the RNA polymerase complex.

Its subcellular location is the cytoplasm. The catalysed reaction is RNA(n) + a ribonucleoside 5'-triphosphate = RNA(n+1) + diphosphate. In terms of biological role, DNA-dependent RNA polymerase (RNAP) catalyzes the transcription of DNA into RNA using the four ribonucleoside triphosphates as substrates. The protein is DNA-directed RNA polymerase subunit Rpo6 of Thermococcus gammatolerans (strain DSM 15229 / JCM 11827 / EJ3).